The sequence spans 451 residues: POU domain, class 3, transcription factor 1 (451 aa).

Disordered stretches follow at residues 1–21 (MATT…GTGP), 69–114 (AHPQ…GFHA), 127–154 (AWAQ…HQPQ), 186–253 (GLHH…PSSD), and 395–451 (KRMT…GSVQ). Composition is skewed to gly residues over residues 11–20 (GPGGGAGGTG), 76–85 (TGGGGGGDWA), and 95–112 (AGGG…GGGF). The segment covering 190–199 (ALHEDGHEAQ) has biased composition (basic and acidic residues). Residues 220 to 232 (AGGLHAAAAHLHP) show a composition bias toward low complexity. Positions 247–321 (EDAPSSDDLE…LLNKWLEETD (75 aa)) constitute a POU-specific domain. Positions 339 to 398 (KRKKRTSIEVGVKGALESHFLKCPKPSAHEITGLADSLQLEKEVVRVWFCNRRQKEKRMT) form a DNA-binding region, homeobox. The segment covering 427–436 (PSAPPPPPPA) has biased composition (pro residues).

This sequence belongs to the POU transcription factor family. Class-3 subfamily. In terms of tissue distribution, expressed in embryonal stem cells and in the developing brain.

The protein localises to the nucleus. Transcription factor that binds to the octamer motif (5'-ATTTGCAT-3'). Acts as a transcriptional activator when binding cooperatively with SOX4, SOX11, or SOX12 to gene promoters. Acts as a transcriptional repressor of myelin-specific genes. This Homo sapiens (Human) protein is POU domain, class 3, transcription factor 1 (POU3F1).